Consider the following 684-residue polypeptide: Suppressor of presenilin protein 3 (684 aa).

C2H2-type zinc fingers lie at residues 21–43, 48–71, 123–145, 261–283, and 291–313; these read YKCHLCGQCFYRGCGLASHLRRH, FDCEHCAYTCKHKYAYDRHLLQSH, YKCPLCISTFGSHARAVYHILSH, YLCRNCPYVSWNVSSLWRHFRHH, and WTCIACSYSSSSRVKIDLHVKMH. Disordered regions lie at residues 337–359, 419–440, and 469–501; these read DLNKPTNKKKKPDGGNGSNHSDM, KNNSNPTVLPNKRNSIKTSKSD, and TSKFYRPESPDSLASNNSAHGDEIESTSSDQFQ. C2H2-type zinc fingers lie at residues 590–612 and 618–641; these read RECTDCPFKHNDLQQFRLHRDKH and HTCPECNYSSNNHNQVVEHTFVDH. The disordered stretch occupies residues 652-684; sequence LPSSDSEDDNIPVPPDTPQRKKKAPKRGKRRGW. Over residues 671–684 the composition is skewed to basic residues; the sequence is RKKKAPKRGKRRGW.

Its subcellular location is the nucleus. Probable transcriptional regulator, which participates in the transcriptional repression of the presenilin protein hop-1. The protein is Suppressor of presenilin protein 3 (spr-3) of Caenorhabditis elegans.